Here is a 348-residue protein sequence, read N- to C-terminus: EGF-like domain-containing protein 1 (348 aa).

An N-terminal signal peptide occupies residues 1–19 (MFYLSTFMTIVISLSLVSC). An EGF-like domain is found at 60–92 (TGSNCTVTCQNNGKCYDGSKCLCSSDYTGDLCE). 3 cysteine pairs are disulfide-bonded: C64–C74, C68–C80, and C82–C91. A ZP domain is found at 99–342 (RCTLDAVVFE…PTCAAPXVGQ (244 aa)).

Prismatic layer of shell (at protein level). Expressed primarily in the mantle with highest level in the mantle edge and lower level in the mantle pallium.

Its subcellular location is the secreted. The chain is EGF-like domain-containing protein 1 from Pinctada maxima (Silver-lipped pearl oyster).